We begin with the raw amino-acid sequence, 508 residues long: MASLFRPPESAKCNPNSPRLKLPLLRNNQVDENNIYLTSNGSSTTAYSSHTPEPLTSSTSTLFSQTRLHPSDSSMTLNTMKKRPAPPSLPSLSINSQSKCKTLPELVPIADVSDGKHDLGLKQRVIAENELSGNSDLTPSSMASPFSHTNTSSPYLRNDLSNSVGSDFSNLISAYEQSSSPIKSSSQPKSSSESYIDLNSVRDVDQLDENGWKYANLKDRIETLGILGEGAGGSVSKCKLKNGSKIFALKVINTLNTDPEYQKQIFRELQFNRSFQSEYIVRYYGMFTDDENSSIYIAMEYMGGRSLDAIYKNLLERGGRISEKVLGKIAEAVLRGLSYLHEKKVIHRDIKPQNILLNENGQVKLCDFGVSGEAVNSLATTFTGTSFYMAPERIQGQPYSVTSDVWSLGLTILEVANGKFPCSSEKMAANIAPFELLMWILTFTPELKDEPESNIIWSPSFKSFIDYCLKKDSRERPSPRQMINHPWIKGQMKKNVNMEKFVRKCWKD.

Disordered regions lie at residues methionine 1–lysine 21, isoleucine 35–asparagine 95, and glutamate 130–asparagine 158. Polar residues predominate over residues isoleucine 35–tyrosine 47. Residues serine 48–threonine 66 are compositionally biased toward low complexity. Polar residues-rich tracts occupy residues arginine 67–threonine 79 and leucine 131–asparagine 158. Serine 192 is subject to Phosphoserine. Residues isoleucine 221–isoleucine 488 form the Protein kinase domain. Residues leucine 227 to valine 235 and lysine 250 contribute to the ATP site. Aspartate 349 acts as the Proton acceptor in catalysis.

It belongs to the protein kinase superfamily. STE Ser/Thr protein kinase family. MAP kinase kinase subfamily.

It carries out the reaction L-seryl-[protein] + ATP = O-phospho-L-seryl-[protein] + ADP + H(+). The enzyme catalyses L-threonyl-[protein] + ATP = O-phospho-L-threonyl-[protein] + ADP + H(+). It catalyses the reaction L-tyrosyl-[protein] + ATP = O-phospho-L-tyrosyl-[protein] + ADP + H(+). Functionally, involved in a signal transduction pathway that play a role in yeast cell morphogenesis and cell growth. This pathway seems to start by SMP3; then involve the kinase PKC1 that may act on the BCK1 kinase that then phosphorylates MKK1 and MKK2 which themselves phosphorylate the MPK1 kinase. This is MAP kinase kinase MKK1/SSP32 (MKK1) from Saccharomyces cerevisiae (strain ATCC 204508 / S288c) (Baker's yeast).